Here is a 204-residue protein sequence, read N- to C-terminus: Large ribosomal subunit protein eL15 (204 aa).

This sequence belongs to the eukaryotic ribosomal protein eL15 family.

The protein is Large ribosomal subunit protein eL15 (RpL15) of Chironomus tentans (Midge).